We begin with the raw amino-acid sequence, 400 residues long: MSKKTVASLSAADISGKRALVRVDFNVPLDDQGNITDDTRIRAALPTIQDLTQKGAKVILASHFGRPKGVDEKLRLTPVAKRLSELLGQEVIKTDDSIGDEVAAKVATLQNGQVLLLENVRFYKEEEKNDPEFAKKLAANADFYVNDAFGTAHRAHASTEGVTKFLSPSVAGYLVEKELQYLQSAIENPQRPLAAIIGGSKVSSKIGVIETLLEKCDKLIIGGGMIFTFYKARGLNVGKSLVEEDKLELAKSLEAKAKERGVSLLLPTDVVLADNFAPDANSQTVSIENIPDGWMGLDIGPDSVKVFQAALADTKTVIWNGPMGVFEFDKFAAGTEAIAHTLAEIGKTGTTTIIGGGDSVAAVEKVGLADQMSHISTGGGASLELLEGKVLPGIAALDEA.

Substrate contacts are provided by residues 24–26, R40, 63–66, R121, and R154; these read DFN and HFGR. Residues K205, G296, E327, and 356 to 359 contribute to the ATP site; that span reads GGDS.

As to quaternary structure, monomer.

The protein resides in the cytoplasm. The enzyme catalyses (2R)-3-phosphoglycerate + ATP = (2R)-3-phospho-glyceroyl phosphate + ADP. It participates in carbohydrate degradation; glycolysis; pyruvate from D-glyceraldehyde 3-phosphate: step 2/5. This chain is Phosphoglycerate kinase, found in Nostoc sp. (strain PCC 7120 / SAG 25.82 / UTEX 2576).